The primary structure comprises 166 residues: Peroxynitrite isomerase Rv2717c (166 aa).

The short motif at 28 to 34 is the GXWXGXG element; sequence GTWRGQG. Heme b contacts are provided by Thr-40 and His-158.

It belongs to the nitrobindin family. In terms of assembly, homodimer. Heme b serves as cofactor.

The protein resides in the cytoplasm. The enzyme catalyses peroxynitrite = nitrate. It functions in the pathway nitrogen metabolism. Functionally, heme-binding protein able to scavenge peroxynitrite and to protect free L-tyrosine against peroxynitrite-mediated nitration, by acting as a peroxynitrite isomerase that converts peroxynitrite to nitrate. Therefore, this protein likely plays a role in peroxynitrite sensing and in the detoxification of reactive nitrogen and oxygen species (RNS and ROS, respectively). Is able to bind nitric oxide (NO) in vitro, but may act as a sensor of peroxynitrite levels in vivo. This is Peroxynitrite isomerase Rv2717c from Arabidopsis thaliana (Mouse-ear cress).